Consider the following 238-residue polypeptide: DNA repair protein RecO (238 aa).

This sequence belongs to the RecO family.

In terms of biological role, involved in DNA repair and RecF pathway recombination. The polypeptide is DNA repair protein RecO (Aliivibrio fischeri (strain ATCC 700601 / ES114) (Vibrio fischeri)).